A 79-amino-acid polypeptide reads, in one-letter code: Small ribosomal subunit protein bS16 (79 aa).

This sequence belongs to the bacterial ribosomal protein bS16 family.

This Desulfovibrio desulfuricans (strain ATCC 27774 / DSM 6949 / MB) protein is Small ribosomal subunit protein bS16.